We begin with the raw amino-acid sequence, 272 residues long: Dihydropteroate synthase (272 aa).

One can recognise a Pterin-binding domain in the interval 1–256; it reads MIKTKIMGIL…NVLLNTRLAQ (256 aa). Mg(2+) is bound at residue N11. Residues T51, D89, N108, D172, K208, and 244 to 246 each bind (7,8-dihydropterin-6-yl)methyl diphosphate; that span reads RVH.

The protein belongs to the DHPS family. In terms of assembly, homodimer. Mg(2+) serves as cofactor.

It carries out the reaction (7,8-dihydropterin-6-yl)methyl diphosphate + 4-aminobenzoate = 7,8-dihydropteroate + diphosphate. Its pathway is cofactor biosynthesis; tetrahydrofolate biosynthesis; 7,8-dihydrofolate from 2-amino-4-hydroxy-6-hydroxymethyl-7,8-dihydropteridine diphosphate and 4-aminobenzoate: step 1/2. In terms of biological role, catalyzes the condensation of para-aminobenzoate (pABA) with 6-hydroxymethyl-7,8-dihydropterin diphosphate (DHPt-PP) to form 7,8-dihydropteroate (H2Pte), the immediate precursor of folate derivatives. This is Dihydropteroate synthase (folP) from Staphylococcus epidermidis (strain ATCC 12228 / FDA PCI 1200).